A 160-amino-acid polypeptide reads, in one-letter code: Non-secretory ribonuclease (160 aa).

Positions 1 to 27 are cleaved as a signal peptide; the sequence is MVPKLFTSQICLLLLLGLMGVEGSLHA. Residue tryptophan 34 is glycosylated (C-linked (Man) tryptophan). Residue histidine 42 is the Proton acceptor of the active site. Asparagine 44 is a glycosylation site (N-linked (GlcNAc...) asparagine). 4 disulfide bridges follow: cysteine 50–cysteine 110, cysteine 64–cysteine 122, cysteine 82–cysteine 137, and cysteine 89–cysteine 98. Tyrosine 60 is subject to 3'-nitrotyrosine. Substrate is bound at residue 65–69; it reads KNQNT. 3 N-linked (GlcNAc...) asparagine glycosylation sites follow: asparagine 92, asparagine 111, and asparagine 138. Histidine 155 acts as the Proton donor in catalysis.

This sequence belongs to the pancreatic ribonuclease family. Interacts with and forms a tight 1:1 complex with RNH1. Dimerization of two such complexes may occur.

Its subcellular location is the lysosome. It is found in the cytoplasmic granule. It catalyses the reaction an [RNA] containing cytidine + H2O = an [RNA]-3'-cytidine-3'-phosphate + a 5'-hydroxy-ribonucleotide-3'-[RNA].. It carries out the reaction an [RNA] containing uridine + H2O = an [RNA]-3'-uridine-3'-phosphate + a 5'-hydroxy-ribonucleotide-3'-[RNA].. Its function is as follows. This is a non-secretory ribonuclease. It is a pyrimidine specific nuclease with a slight preference for U. Cytotoxin and helminthotoxin. Possesses a wide variety of biological activities. The chain is Non-secretory ribonuclease (RNASE2) from Macaca fascicularis (Crab-eating macaque).